The sequence spans 58 residues: Small ribosomal subunit protein bS21 (58 aa).

A disordered region spans residues arginine 35–lysine 58. Residues valine 43 to lysine 58 show a composition bias toward basic residues.

Belongs to the bacterial ribosomal protein bS21 family.

This Ruminiclostridium cellulolyticum (strain ATCC 35319 / DSM 5812 / JCM 6584 / H10) (Clostridium cellulolyticum) protein is Small ribosomal subunit protein bS21.